The primary structure comprises 310 residues: Malate dehydrogenase (310 aa).

NAD(+) contacts are provided by residues 7–13 (GAAGGIG) and D34. Residues R81 and R87 each coordinate substrate. NAD(+)-binding positions include N94 and 117-119 (ITN). Substrate contacts are provided by N119 and R153. H177 (proton acceptor) is an active-site residue. An NAD(+)-binding site is contributed by M227.

The protein belongs to the LDH/MDH superfamily. MDH type 1 family. In terms of assembly, homodimer.

The enzyme catalyses (S)-malate + NAD(+) = oxaloacetate + NADH + H(+). Its function is as follows. Catalyzes the reversible oxidation of malate to oxaloacetate. The protein is Malate dehydrogenase of Vibrio vulnificus (strain CMCP6).